A 542-amino-acid chain; its full sequence is Bifunctional pantoate ligase/cytidylate kinase (542 aa).

The interval 1-280 is pantoate--beta-alanine ligase; sequence MHWLRTVAAL…VGQTRLIDNL (280 aa). 28–35 is a binding site for ATP; sequence MGSLHEGH. His-35 functions as the Proton donor in the catalytic mechanism. A (R)-pantoate-binding site is contributed by Gln-59. Gln-59 provides a ligand contact to beta-alanine. Residue 150–153 participates in ATP binding; that stretch reads GQKD. Residue Gln-156 coordinates (R)-pantoate. ATP is bound by residues Val-179 and 187–190; that span reads CSSR. The tract at residues 281–542 is cytidylate kinase; it reads LLSPEQGDPL…ERSGPARLDQ (262 aa). Residues 287 to 311 are disordered; that stretch reads GDPLPERVQHAAPPSSGTTSPPRRP.

In the N-terminal section; belongs to the pantothenate synthetase family. It in the C-terminal section; belongs to the cytidylate kinase family. Type 1 subfamily.

It localises to the cytoplasm. The enzyme catalyses (R)-pantoate + beta-alanine + ATP = (R)-pantothenate + AMP + diphosphate + H(+). It carries out the reaction CMP + ATP = CDP + ADP. It catalyses the reaction dCMP + ATP = dCDP + ADP. It participates in cofactor biosynthesis; (R)-pantothenate biosynthesis; (R)-pantothenate from (R)-pantoate and beta-alanine: step 1/1. Functionally, catalyzes the condensation of pantoate with beta-alanine in an ATP-dependent reaction via a pantoyl-adenylate intermediate. In terms of biological role, catalyzes the transfer of a phosphate group from ATP to either CMP or dCMP to form CDP or dCDP and ADP, respectively. This chain is Bifunctional pantoate ligase/cytidylate kinase, found in Synechococcus sp. (strain JA-2-3B'a(2-13)) (Cyanobacteria bacterium Yellowstone B-Prime).